Reading from the N-terminus, the 344-residue chain is C-C chemokine receptor-like 2 (344 aa).

At 1–43 (MANYTLAPEDEYDVLIEGELESDEAEQCDRYDTWALSAQLVPS) the chain is on the extracellular side. N-linked (GlcNAc...) asparagine glycosylation occurs at N3. A helical transmembrane segment spans residues 44–64 (LCSAVFVVGVLDNLLVVLILV). Residues 65–74 (KYKGLKRVEN) are Cytoplasmic-facing. A helical membrane pass occupies residues 75–95 (IYLLNLAVSNLCFLLTLPFWA). The Extracellular portion of the chain corresponds to 96 to 104 (HAGGDPMCK). A disulfide bridge links C103 with C181. A helical membrane pass occupies residues 105–125 (ILIGLYFVGLYSETFFNCLLT). Residues 126 to 148 (LQRYLVFLHKGNFFSVRRRVPCG) are Cytoplasmic-facing. A helical membrane pass occupies residues 149-169 (IVTSAVAWVTAILATVPEFAV). Residues 170 to 198 (YKPQMEDPKYKCAFSRTPFLPADETFWKH) lie on the Extracellular side of the membrane. The chain crosses the membrane as a helical span at residues 199–219 (FLTLKMNVSVLVFPLFIFTFL). Topologically, residues 220 to 238 (YVQMRKTLRFGEQRYSLFK) are cytoplasmic. Residues 239 to 259 (LVFAIMVVFLLMWAPYNIALF) form a helical membrane-spanning segment. Over 260-281 (LSTFKEHFSLSDCKSNYNLDKS) the chain is Extracellular. The chain crosses the membrane as a helical span at residues 282 to 302 (VLITKLIATTHCCVNPLLYVF). Topologically, residues 303 to 344 (LDGTFRKYLCRFFHRRSNTPRQPRRRFAQGTSREEPDRSTEV) are cytoplasmic. The segment at 323-344 (RQPRRRFAQGTSREEPDRSTEV) is disordered. A compositionally biased stretch (basic and acidic residues) spans 334 to 344 (SREEPDRSTEV).

Belongs to the G-protein coupled receptor 1 family.

The protein localises to the cell membrane. In terms of biological role, receptor for CCL19 and chemerin/RARRES2. Does not appear to be a signaling receptor, but may have a role in modulating chemokine-triggered immune responses by capturing and internalizing CCL19 or by presenting RARRES2 ligand to CMKLR1, a functional signaling receptor. Plays a critical role for the development of Th2 responses. This Macaca mulatta (Rhesus macaque) protein is C-C chemokine receptor-like 2 (CCRL2).